We begin with the raw amino-acid sequence, 499 residues long: Glucose-6-phosphate exchanger SLC37A2 (499 aa).

Residues tyrosine 21 to arginine 40 form a helical membrane-spanning segment. N-linked (GlcNAc...) asparagine glycosylation is found at asparagine 53, asparagine 62, and asparagine 66. The next 11 helical transmembrane spans lie at glycine 86–phenylalanine 106, leucine 116–tryptophan 136, tyrosine 143–valine 163, alanine 187–leucine 207, serine 208–valine 228, leucine 302–isoleucine 322, glycine 334–isoleucine 354, alanine 362–phenylalanine 382, isoleucine 391–alanine 411, alanine 434–leucine 454, and glycine 458–alanine 478.

This sequence belongs to the major facilitator superfamily. Organophosphate:Pi antiporter (OPA) (TC 2.A.1.4) family.

It is found in the endoplasmic reticulum membrane. The catalysed reaction is D-glucose 6-phosphate(in) + phosphate(out) = D-glucose 6-phosphate(out) + phosphate(in). Functionally, inorganic phosphate and glucose-6-phosphate antiporter. May transport cytoplasmic glucose-6-phosphate into the lumen of the endoplasmic reticulum and translocate inorganic phosphate into the opposite direction. This Xenopus laevis (African clawed frog) protein is Glucose-6-phosphate exchanger SLC37A2.